The chain runs to 252 residues: 2-succinyl-6-hydroxy-2,4-cyclohexadiene-1-carboxylate synthase (252 aa).

This sequence belongs to the AB hydrolase superfamily. MenH family. As to quaternary structure, monomer.

The catalysed reaction is 5-enolpyruvoyl-6-hydroxy-2-succinyl-cyclohex-3-ene-1-carboxylate = (1R,6R)-6-hydroxy-2-succinyl-cyclohexa-2,4-diene-1-carboxylate + pyruvate. It participates in quinol/quinone metabolism; 1,4-dihydroxy-2-naphthoate biosynthesis; 1,4-dihydroxy-2-naphthoate from chorismate: step 3/7. It functions in the pathway quinol/quinone metabolism; menaquinone biosynthesis. Catalyzes a proton abstraction reaction that results in 2,5-elimination of pyruvate from 2-succinyl-5-enolpyruvyl-6-hydroxy-3-cyclohexene-1-carboxylate (SEPHCHC) and the formation of 2-succinyl-6-hydroxy-2,4-cyclohexadiene-1-carboxylate (SHCHC). The chain is 2-succinyl-6-hydroxy-2,4-cyclohexadiene-1-carboxylate synthase from Shigella dysenteriae serotype 1 (strain Sd197).